The primary structure comprises 474 residues: ATP synthase subunit beta 1 (474 aa).

157–164 (GGAGVGKT) is an ATP binding site.

The protein belongs to the ATPase alpha/beta chains family. As to quaternary structure, F-type ATPases have 2 components, CF(1) - the catalytic core - and CF(0) - the membrane proton channel. CF(1) has five subunits: alpha(3), beta(3), gamma(1), delta(1), epsilon(1). CF(0) has three main subunits: a(1), b(2) and c(9-12). The alpha and beta chains form an alternating ring which encloses part of the gamma chain. CF(1) is attached to CF(0) by a central stalk formed by the gamma and epsilon chains, while a peripheral stalk is formed by the delta and b chains.

The protein localises to the cell inner membrane. It catalyses the reaction ATP + H2O + 4 H(+)(in) = ADP + phosphate + 5 H(+)(out). Functionally, produces ATP from ADP in the presence of a proton gradient across the membrane. The catalytic sites are hosted primarily by the beta subunits. The polypeptide is ATP synthase subunit beta 1 (Albidiferax ferrireducens (strain ATCC BAA-621 / DSM 15236 / T118) (Rhodoferax ferrireducens)).